The primary structure comprises 294 residues: Potassium-transporting ATPase subunit beta (294 aa).

The Cytoplasmic portion of the chain corresponds to 1–36 (MAALQEKKSCSQRMAEFRHYCWNPDTGQMLGRTPAR). The helical; Signal-anchor for type II membrane protein transmembrane segment at 37-57 (WVWISLYYAGFYVVMTGLFAL) threads the bilayer. At 58–294 (CIYVLMQTID…KVEFKLTIQK (237 aa)) the chain is on the extracellular side. 5 N-linked (GlcNAc...) asparagine glycosylation sites follow: Asn99, Asn103, Asn130, Asn146, and Asn161. The cysteines at positions 131 and 152 are disulfide-linked. A disulfide bridge connects residues Cys162 and Cys178. Residues Asn193 and Asn225 are each glycosylated (N-linked (GlcNAc...) asparagine). Residues 194–294 (NTAPRVDCTF…KVEFKLTIQK (101 aa)) are immunoglobulin-like. Cys201 and Cys266 are oxidised to a cystine.

Belongs to the X(+)/potassium ATPases subunit beta family. As to quaternary structure, the ATPase pump is composed of two subunits: alpha (catalytic) and beta (regulatory). Interacts with alpha subunit ATP12A; this interaction is required for the formation of a functionally active pump and targeting at the plasma membrane. Interacts (via N-terminus) with alpha subunit ATP4A (via the P-domain). In terms of processing, N-glycosylation is necessary for assembly and functional expression of the pump at the plasma membrane. In terms of tissue distribution, expressed in parietal cells (at protein level).

The protein resides in the apical cell membrane. It localises to the cell membrane. In terms of biological role, the beta subunit of the gastric H(+)/K(+) ATPase pump which transports H(+) ions in exchange for K(+) ions across the apical membrane of parietal cells. Plays a structural and regulatory role in the assembly and membrane targeting of a functionally active pump. Within a transport cycle, the transfer of a H(+) ion across the membrane is coupled to ATP hydrolysis and is associated with a transient phosphorylation of the alpha subunit that shifts the pump conformation from inward-facing (E1) to outward-facing state (E2). Interacts with the phosphorylation domain of the alpha subunit and functions as a ratchet, stabilizing the lumenal-open E2 conformation and preventing the reverse reaction of the transport cycle. This chain is Potassium-transporting ATPase subunit beta (Atp4b), found in Mus musculus (Mouse).